A 905-amino-acid chain; its full sequence is MTNPSPKLTPMFEQYLRIKEDYPDALLFYRMGDFYELFFDDAETTARELQIALTCRNPNAELKAPMCGVPYHAVEGYISQLLDKGYRVAICEQIEDPKEAKGLVKRAVTRVLTPGTVIDDANLDAKEHNYLGALFWNQDAEAGAFAWVDVSTGEWSGLYSRKLAELWQWAQKMAPRELLLPEGVDTPAMATLGTTQTVRVPARSHFDLKSGTERVMRAQGVADLGSLGLEGKPELVRACAALLAYLAQTQKQELSHLAPFKPLNLGRHLIIDEVTERNLELFHRLDGRKGPGTLWHILDRTLTPMGGRLLEERMHHPWREASPIRETQQVVEWLFQDDVRREALRTALDLVYDLERLSTRIFLNRATPKDFIALRQSLSALPAVRATLERPANPEGTYPTDAETSGDTLPKPLSDMLSAWDDLADYADLLRRALTDNPPHLVTEGGLFRPGFDPDLDELLDLAEHGEARLQELLAEEQTVSGLPKLKLGYNRVFGYFFELSRAGADSVPEHFVRRQTLANAERFTTERLKELEEKLVSATDRRKTLEYRLFQSLRDTVAEARPRVLFMADMLAHLDFWQSLADVARRNGWVRPDVHTGHDIVIREGRHPVVEAMQGSASFVPNDLRMDEKRRLLLITGPNMAGKSTVLRQTAIICLLAQMGAFVPAREASIGIADRIFSRVGASDNLAQGQSTFMVEMMETARILRQASKRSLVILDEIGRGTSTFDGMALAWAVVEELTRRAGGGIRTLFATHYHEITSLEGRIPGVHNMNIAIREWNGDIVFLRRLVPGPADKSYGIEVARLAGVPHSVVQRARELLADLERTRDAARGTNSAPSRQTLPGLDLPSKQEQVDTIVAPPPCSGVEHPLLVALRDIDTDDMTPLEALKRITEWKQLWGTTREDRS.

The disordered stretch occupies residues 389-410; sequence ERPANPEGTYPTDAETSGDTLP. ATP is bound at residue 638–645; the sequence is GPNMAGKS. A disordered region spans residues 826-847; it reads RDAARGTNSAPSRQTLPGLDLP. Residues 831–840 are compositionally biased toward polar residues; it reads GTNSAPSRQT.

The protein belongs to the DNA mismatch repair MutS family.

Its function is as follows. This protein is involved in the repair of mismatches in DNA. It is possible that it carries out the mismatch recognition step. This protein has a weak ATPase activity. The polypeptide is DNA mismatch repair protein MutS (Nitratidesulfovibrio vulgaris (strain ATCC 29579 / DSM 644 / CCUG 34227 / NCIMB 8303 / VKM B-1760 / Hildenborough) (Desulfovibrio vulgaris)).